Reading from the N-terminus, the 209-residue chain is Protein GET1 (209 aa).

Residues 1–3 (MSL) are Lumenal-facing. Residues 4 to 23 (LLVIFLLELVVQLVNTIGAK) form a helical membrane-spanning segment. Residues 24–110 (TINNLLWRFY…SFSRKLTIYR (87 aa)) are Cytoplasmic-facing. Residues 74–101 (WARLQRKHDKLMDELEKKKSQLDAHRTS) are a coiled coil. The chain crosses the membrane as a helical span at residues 111 to 131 (WILTRGMQWFLCFWFSSQPMF). Residues 132–155 (WLPYGWFPYWVEWLVSFPNAPMGS) lie on the Lumenal side of the membrane. The helical transmembrane segment at 156-172 (VSIVVWQSACSGVLALV) threads the bilayer. The Cytoplasmic segment spans residues 173–209 (IEAVMAVVRYTGGTGMQKQRQPVPAAGGAPGTSKKDL). Positions 188–209 (MQKQRQPVPAAGGAPGTSKKDL) are disordered.

Belongs to the WRB/GET1 family. In terms of assembly, interacts with GET3.

It is found in the endoplasmic reticulum membrane. Its function is as follows. Required for the post-translational delivery of tail-anchored (TA) proteins to the endoplasmic reticulum. Acts as a membrane receptor for soluble GET3, which recognizes and selectively binds the transmembrane domain of TA proteins in the cytosol. This Chaetomium thermophilum (strain DSM 1495 / CBS 144.50 / IMI 039719) (Thermochaetoides thermophila) protein is Protein GET1.